The chain runs to 149 residues: Putative pre-16S rRNA nuclease (149 aa).

The protein belongs to the YqgF nuclease family.

It localises to the cytoplasm. In terms of biological role, could be a nuclease involved in processing of the 5'-end of pre-16S rRNA. This is Putative pre-16S rRNA nuclease from Burkholderia multivorans (strain ATCC 17616 / 249).